Here is a 347-residue protein sequence, read N- to C-terminus: UDP-3-O-acylglucosamine N-acyltransferase (347 aa).

Catalysis depends on His-248, which acts as the Proton acceptor.

Belongs to the transferase hexapeptide repeat family. LpxD subfamily. As to quaternary structure, homotrimer.

It catalyses the reaction a UDP-3-O-[(3R)-3-hydroxyacyl]-alpha-D-glucosamine + a (3R)-hydroxyacyl-[ACP] = a UDP-2-N,3-O-bis[(3R)-3-hydroxyacyl]-alpha-D-glucosamine + holo-[ACP] + H(+). The protein operates within bacterial outer membrane biogenesis; LPS lipid A biosynthesis. In terms of biological role, catalyzes the N-acylation of UDP-3-O-acylglucosamine using 3-hydroxyacyl-ACP as the acyl donor. Is involved in the biosynthesis of lipid A, a phosphorylated glycolipid that anchors the lipopolysaccharide to the outer membrane of the cell. This Parasynechococcus marenigrum (strain WH8102) protein is UDP-3-O-acylglucosamine N-acyltransferase.